Reading from the N-terminus, the 570-residue chain is Sulfite reductase [NADPH] hemoprotein beta-component (570 aa).

4 residues coordinate [4Fe-4S] cluster: cysteine 434, cysteine 440, cysteine 479, and cysteine 483. Siroheme is bound at residue cysteine 483.

Belongs to the nitrite and sulfite reductase 4Fe-4S domain family. In terms of assembly, alpha(8)-beta(8). The alpha component is a flavoprotein, the beta component is a hemoprotein. Siroheme serves as cofactor. Requires [4Fe-4S] cluster as cofactor.

The enzyme catalyses hydrogen sulfide + 3 NADP(+) + 3 H2O = sulfite + 3 NADPH + 4 H(+). Its pathway is sulfur metabolism; hydrogen sulfide biosynthesis; hydrogen sulfide from sulfite (NADPH route): step 1/1. Its function is as follows. Component of the sulfite reductase complex that catalyzes the 6-electron reduction of sulfite to sulfide. This is one of several activities required for the biosynthesis of L-cysteine from sulfate. In Escherichia coli O1:K1 / APEC, this protein is Sulfite reductase [NADPH] hemoprotein beta-component.